Consider the following 204-residue polypeptide: Fluoride-specific ion channel FluC 3 (204 aa).

The span at methionine 1–threonine 16 shows a compositional bias: basic and acidic residues. The disordered stretch occupies residues methionine 1–proline 53. The span at arginine 32 to glutamate 46 shows a compositional bias: pro residues. Helical transmembrane passes span valine 62–leucine 82, phenylalanine 96–isoleucine 116, proline 125–threonine 145, and alanine 158–isoleucine 178. Na(+)-binding residues include glycine 133 and threonine 136.

This sequence belongs to the fluoride channel Fluc/FEX (TC 1.A.43) family.

The protein resides in the cell membrane. It carries out the reaction fluoride(in) = fluoride(out). With respect to regulation, na(+) is not transported, but it plays an essential structural role and its presence is essential for fluoride channel function. Its function is as follows. Fluoride-specific ion channel. Important for reducing fluoride concentration in the cell, thus reducing its toxicity. The chain is Fluoride-specific ion channel FluC 3 from Streptomyces avermitilis (strain ATCC 31267 / DSM 46492 / JCM 5070 / NBRC 14893 / NCIMB 12804 / NRRL 8165 / MA-4680).